A 438-amino-acid chain; its full sequence is Polycomb protein eed-B (438 aa).

The interval 1–70 (MSEASGRAAG…GRKGWGKGKW (70 aa)) is disordered. Positions 40–57 (SIESGTNTERPDTPTNAA) are enriched in polar residues. WD repeat units lie at residues 88 to 131 (DHNQ…DIRL), 139 to 182 (DADE…CIKH), 185 to 225 (GHGN…LVAI), 231 to 270 (GHRDEVLSADYDLLGEKIMSCGMDHSLKLWRINSLRMKTA), 301 to 338 (IHRNYVDCVRWLGDLILSKSCENAIVCWKPGKMEDDIE), 356 to 396 (SQCD…PHKA), and 405 to 438 (KCASAIRQTSFSRDSSVLIAVCDDSTIWRWDRLR).

The protein belongs to the WD repeat ESC family. As to quaternary structure, component of the prc2/eed-ezh2 complex. Can interact with ezh2, hdac1 and taf9. Interacts with yy1.

Its subcellular location is the nucleus. In terms of biological role, polycomb group (PcG) protein. Component of the prc2/eed-ezh2 complex, which methylates 'Lys-9' and 'Lys-27' of histone H3, leading to transcriptional repression of the affected target gene. May play a role in neural induction. In Xenopus laevis (African clawed frog), this protein is Polycomb protein eed-B (eed-b).